The primary structure comprises 282 residues: 5'-nucleotidase SurE (282 aa).

A divalent metal cation is bound by residues D12, D13, S43, and N98.

This sequence belongs to the SurE nucleotidase family. The cofactor is a divalent metal cation.

It localises to the cytoplasm. It carries out the reaction a ribonucleoside 5'-phosphate + H2O = a ribonucleoside + phosphate. Nucleotidase that shows phosphatase activity on nucleoside 5'-monophosphates. This chain is 5'-nucleotidase SurE, found in Hyperthermus butylicus (strain DSM 5456 / JCM 9403 / PLM1-5).